We begin with the raw amino-acid sequence, 321 residues long: Phospho-N-acetylmuramoyl-pentapeptide-transferase (321 aa).

A run of 10 helical transmembrane segments spans residues 1–21 (MIFI…PILI), 50–70 (MGGL…IIFV), 76–96 (IILL…DDYI), 112–132 (FLAQ…FHLV), 140–160 (IPFV…IVFW), 176–196 (GLAT…SYML), 200–220 (AIGI…PYNL), 225–245 (VFMG…ISIM), 250–270 (LSLI…MLQV), and 300–320 (VVTV…WIGV).

It belongs to the glycosyltransferase 4 family. MraY subfamily. Requires Mg(2+) as cofactor.

It localises to the cell membrane. It catalyses the reaction UDP-N-acetyl-alpha-D-muramoyl-L-alanyl-gamma-D-glutamyl-L-lysyl-D-alanyl-D-alanine + di-trans,octa-cis-undecaprenyl phosphate = Mur2Ac(oyl-L-Ala-gamma-D-Glu-L-Lys-D-Ala-D-Ala)-di-trans,octa-cis-undecaprenyl diphosphate + UMP. It participates in cell wall biogenesis; peptidoglycan biosynthesis. Catalyzes the initial step of the lipid cycle reactions in the biosynthesis of the cell wall peptidoglycan: transfers peptidoglycan precursor phospho-MurNAc-pentapeptide from UDP-MurNAc-pentapeptide onto the lipid carrier undecaprenyl phosphate, yielding undecaprenyl-pyrophosphoryl-MurNAc-pentapeptide, known as lipid I. The polypeptide is Phospho-N-acetylmuramoyl-pentapeptide-transferase (Staphylococcus epidermidis (strain ATCC 12228 / FDA PCI 1200)).